The chain runs to 448 residues: Tryptophan--tRNA ligase (448 aa).

ATP-binding positions include 10 to 12 (TPT) and 18 to 19 (GN). The short motif at 11–19 (PTGTPHLGN) is the 'HIGH' region element. Residue Asp143 coordinates L-tryptophan. ATP-binding positions include 155–157 (GRD), Leu197, and 204–208 (KMSKS). A 'KMSKS' region motif is present at residues 204 to 208 (KMSKS).

This sequence belongs to the class-I aminoacyl-tRNA synthetase family. As to quaternary structure, homodimer.

It is found in the cytoplasm. It catalyses the reaction tRNA(Trp) + L-tryptophan + ATP = L-tryptophyl-tRNA(Trp) + AMP + diphosphate + H(+). Its function is as follows. Catalyzes the attachment of tryptophan to tRNA(Trp). In Pseudomonas aeruginosa (strain ATCC 15692 / DSM 22644 / CIP 104116 / JCM 14847 / LMG 12228 / 1C / PRS 101 / PAO1), this protein is Tryptophan--tRNA ligase.